The primary structure comprises 323 residues: Ribose-phosphate pyrophosphokinase 2 (323 aa).

ATP is bound by residues 43 to 45 (DGE) and 102 to 103 (RQ). Mg(2+) contacts are provided by His-136 and Asp-177. The active site involves Lys-200. D-ribose 5-phosphate-binding positions include Arg-202, Asp-226, and 230 to 234 (DTAGT).

This sequence belongs to the ribose-phosphate pyrophosphokinase family. Class I subfamily. In terms of assembly, homohexamer. The cofactor is Mg(2+).

The protein resides in the cytoplasm. It catalyses the reaction D-ribose 5-phosphate + ATP = 5-phospho-alpha-D-ribose 1-diphosphate + AMP + H(+). It functions in the pathway metabolic intermediate biosynthesis; 5-phospho-alpha-D-ribose 1-diphosphate biosynthesis; 5-phospho-alpha-D-ribose 1-diphosphate from D-ribose 5-phosphate (route I): step 1/1. In terms of biological role, involved in the biosynthesis of the central metabolite phospho-alpha-D-ribosyl-1-pyrophosphate (PRPP) via the transfer of pyrophosphoryl group from ATP to 1-hydroxyl of ribose-5-phosphate (Rib-5-P). This is Ribose-phosphate pyrophosphokinase 2 from Enterococcus faecalis (strain ATCC 700802 / V583).